A 168-amino-acid chain; its full sequence is G/U mismatch-specific DNA glycosylase (168 aa).

It belongs to the uracil-DNA glycosylase (UDG) superfamily. TDG/mug family. Binds DNA as a monomer.

Its subcellular location is the cytoplasm. The enzyme catalyses Specifically hydrolyzes mismatched double-stranded DNA and polynucleotides, releasing free uracil.. In terms of biological role, excises ethenocytosine and uracil, which can arise by alkylation or deamination of cytosine, respectively, from the corresponding mispairs with guanine in ds-DNA. It is capable of hydrolyzing the carbon-nitrogen bond between the sugar-phosphate backbone of the DNA and the mispaired base. The complementary strand guanine functions in substrate recognition. Required for DNA damage lesion repair in stationary-phase cells. The chain is G/U mismatch-specific DNA glycosylase from Escherichia fergusonii (strain ATCC 35469 / DSM 13698 / CCUG 18766 / IAM 14443 / JCM 21226 / LMG 7866 / NBRC 102419 / NCTC 12128 / CDC 0568-73).